An 86-amino-acid polypeptide reads, in one-letter code: Putative protein adenylyltransferase MJ1215 (86 aa).

The GSX(10)DXD motif motif lies at 35-49 (GSYARGEQKETSDID). Mg(2+)-binding residues include Asp-47, Asp-49, and Asp-79.

This sequence belongs to the MntA antitoxin family. Probably forms a complex with cognate toxin MJ1216. It depends on Mg(2+) as a cofactor.

The enzyme catalyses L-tyrosyl-[protein] + ATP = O-(5'-adenylyl)-L-tyrosyl-[protein] + diphosphate. It catalyses the reaction O-(5'-adenylyl)-L-tyrosyl-[protein] + ATP = O-[5'-(adenylyl-(5'-&gt;3')-adenylyl)]-L-tyrosyl-[protein] + diphosphate. Probable antitoxin component of a putative type VII toxin-antitoxin (TA) system. Neutralizes cognate toxic MJ1216 by di-AMPylation. The polypeptide is Putative protein adenylyltransferase MJ1215 (Methanocaldococcus jannaschii (strain ATCC 43067 / DSM 2661 / JAL-1 / JCM 10045 / NBRC 100440) (Methanococcus jannaschii)).